The primary structure comprises 137 residues: uncharacterized protein (137 aa).

Residues 67–87 (KSERQHQRVHHELPHDKPRQS) form a disordered region. Positions 70–85 (RQHQRVHHELPHDKPR) are enriched in basic and acidic residues.

This is an uncharacterized protein from Human cytomegalovirus (strain AD169) (HHV-5).